The sequence spans 55 residues: Large ribosomal subunit protein bL32c (55 aa).

The protein belongs to the bacterial ribosomal protein bL32 family.

It localises to the plastid. The protein localises to the chloroplast. The protein is Large ribosomal subunit protein bL32c of Daucus carota (Wild carrot).